Consider the following 358-residue polypeptide: Neuronal-specific septin-3 (358 aa).

The segment covering Met-1 to Thr-10 has biased composition (basic and acidic residues). A disordered region spans residues Met-1–Lys-30. The Septin-type G domain occupies Thr-58–Asp-331. The segment at Gly-68–Ser-75 is G1 motif. Gly-68–Ser-75 provides a ligand contact to GTP. Ser-91 carries the phosphoserine modification. Thr-102 serves as a coordination point for GTP. Residues Asp-125–Gly-128 form a G3 motif region. The segment at Ala-207 to Asp-210 is G4 motif. Residues Lys-208–Glu-216, Gly-265, and Arg-280 contribute to the GTP site.

Belongs to the TRAFAC class TrmE-Era-EngA-EngB-Septin-like GTPase superfamily. Septin GTPase family. Septins polymerize into heterooligomeric protein complexes that form filaments, and can associate with cellular membranes, actin filaments and microtubules. GTPase activity is required for filament formation. In terms of processing, phosphorylated by PKG on serine residues. Phosphorylated by PKG on Ser-91. In terms of tissue distribution, brain-specific.

Its subcellular location is the cytoplasm. It is found in the cytoskeleton. The protein localises to the synapse. Functionally, filament-forming cytoskeletal GTPase. May play a role in cytokinesis (Potential). This Homo sapiens (Human) protein is Neuronal-specific septin-3.